Consider the following 744-residue polypeptide: Cullin-3 (744 aa).

One can recognise a Cullin neddylation domain in the interval 677 to 736 (MELSAIIVRIMKTEGKLSHQQLLERTTKRTQSRLSLTPSILKRSIQLLIEKEYIQRNADD). Lys688 participates in a covalent cross-link: Glycyl lysine isopeptide (Lys-Gly) (interchain with G-Cter in NEDD8).

It belongs to the cullin family. As to quaternary structure, component of a ubiquitin-protein ligase complex consisting of the cullin CUL3, the linker protein ELC1, the substrate receptor ELA1, and the RING protein HRT1. Neddylated; enhancing the ubiquitin-ligase activity.

It functions in the pathway protein modification; protein ubiquitination. Its function is as follows. As part of the CRL3 E3 ubiquitin ligase complex; polyubiquitylates monoubiquitylated RNA polymerase II subunit RPO21 to trigger its proteolysis; plays a role in global genomic repair. The chain is Cullin-3 (CUL3) from Saccharomyces cerevisiae (strain ATCC 204508 / S288c) (Baker's yeast).